Consider the following 259-residue polypeptide: UPF0246 protein PLES_14941 (259 aa).

Belongs to the UPF0246 family.

The protein is UPF0246 protein PLES_14941 of Pseudomonas aeruginosa (strain LESB58).